We begin with the raw amino-acid sequence, 717 residues long: ATP-dependent zinc metalloprotease FtsH (717 aa).

At 1–9 the chain is on the cytoplasmic side; it reads MKNASRIFK. Residues 10-30 form a helical membrane-spanning segment; sequence GPLIWILLCIGLIIVFLQFAG. The Extracellular portion of the chain corresponds to 31 to 111; sequence SGNGYKDIPT…SWQGENPGQS (81 aa). Residues 112–132 traverse the membrane as a helical segment; the sequence is IWKALLINFLPFVIILLFFLW. At 133 to 717 the chain is on the cytoplasmic side; sequence AMNAAQGMGG…NGNPWGPPRS (585 aa). 207-214 serves as a coordination point for ATP; sequence GPPGTGKT. His-429 lines the Zn(2+) pocket. The active site involves Glu-430. 2 residues coordinate Zn(2+): His-433 and Asp-505. A disordered region spans residues 617 to 717; that stretch reads AFTGSDKRVP…NGNPWGPPRS (101 aa). Pro residues predominate over residues 691–717; the sequence is PEPPSPTHPGEGPQPPSNGNPWGPPRS.

It in the central section; belongs to the AAA ATPase family. The protein in the C-terminal section; belongs to the peptidase M41 family. Homohexamer. Zn(2+) is required as a cofactor.

It is found in the cell membrane. In terms of biological role, acts as a processive, ATP-dependent zinc metallopeptidase for both cytoplasmic and membrane proteins. Plays a role in the quality control of integral membrane proteins. The chain is ATP-dependent zinc metalloprotease FtsH from Cutibacterium acnes (strain SK137) (Propionibacterium acnes).